Reading from the N-terminus, the 119-residue chain is Membrane-anchored ubiquitin-fold protein 6 (119 aa).

Residues 8–76 (IELKFRLADG…NNRTLAESRL (69 aa)) form the Ubiquitin-like domain. Cysteine 114 is lipidated: S-palmitoyl cysteine. At cysteine 116 the chain carries Cysteine methyl ester. Cysteine 116 carries the S-geranylgeranyl cysteine lipid modification. Residues 117 to 119 (TIL) constitute a propeptide, removed in mature form.

In terms of tissue distribution, ubiquitous.

Its subcellular location is the cell membrane. In terms of biological role, may serve as docking site to facilitate the association of other proteins to the plasma membrane. The protein is Membrane-anchored ubiquitin-fold protein 6 (MUB6) of Arabidopsis thaliana (Mouse-ear cress).